Consider the following 132-residue polypeptide: 3-aminoacrylate deaminase RutC (132 aa).

This sequence belongs to the RutC family.

It catalyses the reaction (Z)-3-aminoacrylate + H2O + H(+) = 3-oxopropanoate + NH4(+). Involved in pyrimidine catabolism. Catalyzes the deamination of 3-aminoacrylate to malonic semialdehyde, a reaction that can also occur spontaneously. RutC may facilitate the reaction and modulate the metabolic fitness, rather than catalyzing essential functions. The sequence is that of 3-aminoacrylate deaminase RutC from Cronobacter sakazakii (strain ATCC BAA-894) (Enterobacter sakazakii).